Reading from the N-terminus, the 444-residue chain is Sprouty-related, EVH1 domain-containing protein 1 (444 aa).

The residue at position 2 (Ser2) is an N-acetylserine. Residues 6 to 123 enclose the WH1 domain; that stretch reads ATSDNDNSYA…RGIRRAIEDI (118 aa). At Lys225 the chain carries N6-methyllysine. A KBD domain is found at 234–286; that stretch reads SIRHVSFQDEDEIVRINPRDILIRRYADYRHPDMWKNDLERDDTDSSVPFSKQ. Ser239 carries the post-translational modification Phosphoserine. Residues 268-287 form a disordered region; that stretch reads WKNDLERDDTDSSVPFSKQD. Ser309 is subject to Phosphoserine. Residues 333–444 form a required for interaction with TESK1 region; it reads SRCVYCQERF…CCGGKHKAAG (112 aa). Positions 334 to 442 constitute an SPR domain; it reads RCVYCQERFN…CGCCGGKHKA (109 aa).

In terms of assembly, homodimer and heterodimer. Able to interact with SPRED2 to form heterodimers. Interacts (via C-terminus) with TAOK1/MARKK (via C-terminus); the interaction does not affect TAOK1 kinase activity. Interacts (via C-terminus) with TESK1 (via C-terminus); the interaction inhibits TESK1 kinase activity. Interacts with CAV1. Interacts with RAS. Interacts with palmitoyltransferase ZDHHC17/HIP14; the interaction leads to palmitoylation of SPRED1. Palmitoylated by ZDHHC17/HIP14. Post-translationally, ubiquitinated. In terms of processing, phosphorylated on tyrosine. As to expression, expressed in brain. Weakly expressed in lung, heart, liver, kidney, intestine, spleen, testis, thymus, colon and ovary. Also expressed in embryonic tissues such as heart, lung, liver and brain. Highly expressed in IL3-dependent hematopoietic cell lines (Ba/F3 and MC/9) and bone marrow-derived mast cells (BMMC).

It localises to the cell membrane. The protein localises to the membrane. The protein resides in the caveola. Its subcellular location is the nucleus. Tyrosine kinase substrate that inhibits growth-factor-mediated activation of MAP kinase. Negatively regulates hematopoiesis of bone marrow. Inhibits fibroblast growth factor (FGF)-induced retinal lens fiber differentiation, probably by inhibiting FGF-mediated phosphorylation of ERK1/2. Attenuates actin stress fiber formation via inhibition of TESK1-mediated phosphorylation of cofilin. Inhibits TGFB-induced epithelial-to-mesenchymal transition in lens epithelial cells. This chain is Sprouty-related, EVH1 domain-containing protein 1 (Spred1), found in Mus musculus (Mouse).